We begin with the raw amino-acid sequence, 286 residues long: tRNA(Ile)-lysidine synthase (286 aa).

7–12 is an ATP binding site; sequence SGGPDS.

This sequence belongs to the tRNA(Ile)-lysidine synthase family.

The protein resides in the cytoplasm. It carries out the reaction cytidine(34) in tRNA(Ile2) + L-lysine + ATP = lysidine(34) in tRNA(Ile2) + AMP + diphosphate + H(+). Its function is as follows. Ligates lysine onto the cytidine present at position 34 of the AUA codon-specific tRNA(Ile) that contains the anticodon CAU, in an ATP-dependent manner. Cytidine is converted to lysidine, thus changing the amino acid specificity of the tRNA from methionine to isoleucine. This chain is tRNA(Ile)-lysidine synthase, found in Mycoplasmopsis pulmonis (strain UAB CTIP) (Mycoplasma pulmonis).